A 214-amino-acid chain; its full sequence is Thymidylate kinase (214 aa).

Gly-10 to Thr-17 lines the ATP pocket.

It belongs to the thymidylate kinase family.

It carries out the reaction dTMP + ATP = dTDP + ADP. In terms of biological role, phosphorylation of dTMP to form dTDP in both de novo and salvage pathways of dTTP synthesis. The protein is Thymidylate kinase of Prochlorococcus marinus subsp. pastoris (strain CCMP1986 / NIES-2087 / MED4).